Here is a 239-residue protein sequence, read N- to C-terminus: Inner kinetochore subunit MCM22 (239 aa).

The protein belongs to the CENP-K/MCM22 family. As to quaternary structure, component of the heterotrimeric kinetochore subcomplex CTF3, which consists of CTF3, MCM16 and MCM22. The CTF3 subcomplex is part of a larger constitutive centromere-associated network (CCAN) (also known as central kinetochore CTF19 complex in yeast), which is composed of at least AME1, CHL4, CNN1, CTF3, CTF19, IML3, MCM16, MCM21, MCM22, MHF1, MHF2, MIF2, NKP1, NKP2, OKP1 and WIP1. Interacts with CTF19.

The protein localises to the nucleus. The protein resides in the chromosome. It is found in the centromere. Its subcellular location is the kinetochore. Its function is as follows. Component of the kinetochore, a multiprotein complex that assembles on centromeric DNA and attaches chromosomes to spindle microtubules, mediating chromosome segregation and sister chromatid segregation during meiosis and mitosis. Component of the inner kinetochore constitutive centromere-associated network (CCAN), which serves as a structural platform for outer kinetochore assembly. The sequence is that of Inner kinetochore subunit MCM22 (MCM22) from Saccharomyces cerevisiae (strain ATCC 204508 / S288c) (Baker's yeast).